We begin with the raw amino-acid sequence, 283 residues long: MKLPAIRYASPASIEDACDLLSTDEDSKIIAGGQSLLPVMAMRLAQPSVVIDLGNVPGLTRLEEVGDYVRFGPMVTHATIVNSPAVAKHLPMMAAAGRHIAHPQIRNRGTLGGSLAHGDAAGEWPLVLLALNGMVEVQSVRGRRTIEADDLFVGPYMTSLAADEIITDVWIPSRPNGWGYGEFARRSGDYGLANVAVVLSTADSRISDVRIAVGGAVGKIQRVPDAEDVLNGSELSPERAEAASEAGAKSLSYISDIHGSAEYRHGLVQELIRRTIVEAGART.

The FAD-binding PCMH-type domain occupies Met-1–Asn-176. FAD is bound by residues Ala-31–Ser-35 and Thr-110–Ser-114.

In terms of assembly, heterotrimer composed of a large subunit (NdhL), a medium subunit (NdhM) and a small subunit (NdhS). FAD is required as a cofactor.

Its subcellular location is the cytoplasm. The enzyme catalyses (R)-nicotine + A + H2O = (R)-6-hydroxynicotine + AH2. The catalysed reaction is (S)-nicotine + A + H2O = (S)-6-hydroxynicotine + AH2. It functions in the pathway alkaloid degradation; nicotine degradation; 6-hydroxypseudooxynicotine from nicotine (R-isomer route): step 1/2. Its pathway is alkaloid degradation; nicotine degradation; 6-hydroxypseudooxynicotine from nicotine (S-isomer route): step 1/2. With respect to regulation, nicotine dehydrogenase activity is inhibited by tungsten. Component of the nicotine 6-hydroxylase, which is involved in the degradation of nicotine. Catalyzes the hydroxylation of the pyridine ring at C6 to form 6-hydroxynicotine. Can use both L-nicotine and D-nicotine. The sequence is that of Nicotine 6-hydroxylase medium subunit from Paenarthrobacter nicotinovorans (Arthrobacter nicotinovorans).